The following is a 1113-amino-acid chain: Period circadian protein homolog 3 (1113 aa).

The segment at 1–48 (MDPCGDPAVPGGDCPQTRGPGLQGASGQEGPLQGTCVDSSHSEHEDRN) is disordered. The Nuclear export signal 1 signature appears at 54-63 (LIMVVQEMKK). PAS domains follow at residues 120-187 (LASE…PTQL) and 258-324 (YEAP…KVLK). A PAC domain is found at 333–376 (HSPVRFCTQNGEYVILDSSWSSFVNPWSRKVSFIIGRHKVRTSP). The short motif at 399–408 (LQEQIHKLLL) is the Nuclear export signal 3 element. The span at 418-427 (GYGSLGSSGS) shows a compositional bias: low complexity. Disordered regions lie at residues 418-451 (GYGS…GQHE), 485-530 (VAET…SSSY), 561-580 (TSSS…SQRD), 718-742 (HSRC…DTSS), and 871-906 (LVPA…PFIS). Polar residues-rich tracts occupy residues 428 to 441 (QEQH…SESS) and 501 to 530 (FSSS…SSSY). Residues 551 to 750 (LKRKCISCTN…SSPGAHLCPH (200 aa)) are CSNK1E binding domain. The segment covering 566-580 (EEAKPIPEVDSSQRD) has biased composition (basic and acidic residues). The short motif at 719-735 (SRCAGSERQKHKRKKLP) is the Nuclear localization signal element. Over residues 889-901 (RRVEENWEAHSEE) the composition is skewed to basic and acidic residues. Serine 907 is modified (phosphoserine). A Nuclear export signal 2 motif is present at residues 913-920 (LQLNLLQE). Residues 921 to 1010 (EMPAPSESAD…DRQRDEALPG (90 aa)) form a disordered region. Positions 962-986 (ATATAQQESAAASGSSASSIYFSST) are enriched in low complexity. Positions 993–1007 (SENRQRPQDRQRDEA) are enriched in basic and acidic residues. The tract at residues 1035–1113 (ERGREEVLKQ…LEQHPAEDTS (79 aa)) is CRY binding domain.

As to quaternary structure, homodimer. Component of the circadian core oscillator, which includes the CRY proteins, CLOCK or NPAS2, BMAL1 or BMAL2, CSNK1D and/or CSNK1E, TIMELESS and the PER proteins. Interacts directly with PER1, PER2, CRY1, CRY2, and TIMELESS; interaction with CRY1 and CRY2 is weak and not rhythmic. Interacts with FBXW11 and BTRC. Post-translationally, phosphorylation by CSNK1E is weak and appears to require association with PER1 and translocation to the nucleus. In terms of processing, ubiquitinated. As to expression, widely expressed. Expressed in heart, brain, lung, liver, skeletal muscle, testis, and at low level in the spleen and kidney. In brain, mainly found in the SCN, hippocampus, piriform cortex, and cerebellum. Lower level of expression in the neocortex. Expression exhibits synchronous oscillations in liver, skeletal muscle and testis.

The protein localises to the cytoplasm. The protein resides in the nucleus. Its function is as follows. Originally described as a core component of the circadian clock. The circadian clock, an internal time-keeping system, regulates various physiological processes through the generation of approximately 24 hour circadian rhythms in gene expression, which are translated into rhythms in metabolism and behavior. It is derived from the Latin roots 'circa' (about) and 'diem' (day) and acts as an important regulator of a wide array of physiological functions including metabolism, sleep, body temperature, blood pressure, endocrine, immune, cardiovascular, and renal function. Consists of two major components: the central clock, residing in the suprachiasmatic nucleus (SCN) of the brain, and the peripheral clocks that are present in nearly every tissue and organ system. Both the central and peripheral clocks can be reset by environmental cues, also known as Zeitgebers (German for 'timegivers'). The predominant Zeitgeber for the central clock is light, which is sensed by retina and signals directly to the SCN. The central clock entrains the peripheral clocks through neuronal and hormonal signals, body temperature and feeding-related cues, aligning all clocks with the external light/dark cycle. Circadian rhythms allow an organism to achieve temporal homeostasis with its environment at the molecular level by regulating gene expression to create a peak of protein expression once every 24 hours to control when a particular physiological process is most active with respect to the solar day. Transcription and translation of core clock components (CLOCK, NPAS2, BMAL1, BMAL2, PER1, PER2, PER3, CRY1 and CRY2) plays a critical role in rhythm generation, whereas delays imposed by post-translational modifications (PTMs) are important for determining the period (tau) of the rhythms (tau refers to the period of a rhythm and is the length, in time, of one complete cycle). A diurnal rhythm is synchronized with the day/night cycle, while the ultradian and infradian rhythms have a period shorter and longer than 24 hours, respectively. Disruptions in the circadian rhythms contribute to the pathology of cardiovascular diseases, cancer, metabolic syndromes and aging. A transcription/translation feedback loop (TTFL) forms the core of the molecular circadian clock mechanism. Transcription factors, CLOCK or NPAS2 and BMAL1 or BMAL2, form the positive limb of the feedback loop, act in the form of a heterodimer and activate the transcription of core clock genes and clock-controlled genes (involved in key metabolic processes), harboring E-box elements (5'-CACGTG-3') within their promoters. The core clock genes: PER1/2/3 and CRY1/2 which are transcriptional repressors form the negative limb of the feedback loop and interact with the CLOCK|NPAS2-BMAL1|BMAL2 heterodimer inhibiting its activity and thereby negatively regulating their own expression. This heterodimer also activates nuclear receptors NR1D1, NR1D2, RORA, RORB and RORG, which form a second feedback loop and which activate and repress BMAL1 transcription, respectively. Has a redundant role with the other PER proteins PER1 and PER2 and is not essential for the circadian rhythms maintenance. In contrast, plays an important role in sleep-wake timing and sleep homeostasis probably through the transcriptional regulation of sleep homeostasis-related genes, without influencing circadian parameters. Can bind heme. The sequence is that of Period circadian protein homolog 3 (Per3) from Mus musculus (Mouse).